The primary structure comprises 331 residues: NADH-quinone oxidoreductase subunit H (331 aa).

The next 9 membrane-spanning stretches (helical) occupy residues 6 to 26 (FFIV…ATLA), 45 to 65 (GPWM…IKLF), 78 to 98 (FIFL…MSVI), 120 to 140 (IGIL…LIGG), 167 to 187 (GLSL…DIVH), 193 to 213 (ITSW…IAAF), 241 to 261 (MRWG…SIVI), 263 to 283 (LIFL…MIFL), and 311 to 331 (CWKI…FVII).

It belongs to the complex I subunit 1 family. As to quaternary structure, NDH-1 is composed of 14 different subunits. Subunits NuoA, H, J, K, L, M, N constitute the membrane sector of the complex.

The protein resides in the cell inner membrane. The enzyme catalyses a quinone + NADH + 5 H(+)(in) = a quinol + NAD(+) + 4 H(+)(out). Its function is as follows. NDH-1 shuttles electrons from NADH, via FMN and iron-sulfur (Fe-S) centers, to quinones in the respiratory chain. The immediate electron acceptor for the enzyme in this species is believed to be ubiquinone. Couples the redox reaction to proton translocation (for every two electrons transferred, four hydrogen ions are translocated across the cytoplasmic membrane), and thus conserves the redox energy in a proton gradient. This subunit may bind ubiquinone. This chain is NADH-quinone oxidoreductase subunit H, found in Campylobacter hominis (strain ATCC BAA-381 / DSM 21671 / CCUG 45161 / LMG 19568 / NCTC 13146 / CH001A).